A 379-amino-acid polypeptide reads, in one-letter code: Probable homogentisate phytyltransferase 2, chloroplastic (379 aa).

Residues 1-39 (MASLASPPLPCRAAATASRSGRPAPRLLGPPPPPASPLL) form a disordered region. A chloroplast-targeting transit peptide spans 1-65 (MASLASPPLP…WSRRDAVRVC (65 aa)). 8 helical membrane-spanning segments follow: residues 121-141 (WLVF…GYIV), 174-194 (LVVL…GPFI), 195-215 (TSLY…PFRL), 220-240 (VAAF…GVYY), 252-272 (WSSP…VIAI), 299-319 (IAFL…AVAF), 328-348 (TVMV…TWVL), and 361-378 (YYRF…FFPL).

This sequence belongs to the UbiA prenyltransferase family.

The protein resides in the plastid. It is found in the chloroplast thylakoid membrane. It catalyses the reaction phytyl diphosphate + homogentisate + H(+) = 2-methyl-6-phytyl-1,4-benzene-1,4-diol + CO2 + diphosphate. Its pathway is cofactor biosynthesis; tocopherol biosynthesis. Functionally, involved in the synthesis of tocopherol (vitamin E). Catalyzes the condensation of homogentisate and phytyl diphosphate to form dimethylphytylhydrquinone. The sequence is that of Probable homogentisate phytyltransferase 2, chloroplastic (HPT2) from Oryza sativa subsp. japonica (Rice).